Reading from the N-terminus, the 249-residue chain is NAD kinase (249 aa).

Asp45 functions as the Proton acceptor in the catalytic mechanism. Residues 45–46 (DG), Arg50, 110–111 (NE), Asp138, and 149–154 (SGWGMS) contribute to the NAD(+) site.

Belongs to the NAD kinase family. A divalent metal cation is required as a cofactor.

The protein resides in the cytoplasm. It carries out the reaction NAD(+) + ATP = ADP + NADP(+) + H(+). In terms of biological role, involved in the regulation of the intracellular balance of NAD and NADP, and is a key enzyme in the biosynthesis of NADP. Catalyzes specifically the phosphorylation on 2'-hydroxyl of the adenosine moiety of NAD to yield NADP. This Saccharolobus solfataricus (strain ATCC 35092 / DSM 1617 / JCM 11322 / P2) (Sulfolobus solfataricus) protein is NAD kinase.